A 266-amino-acid polypeptide reads, in one-letter code: UPF0354 protein Lm4b_01619 (266 aa).

This sequence belongs to the UPF0354 family.

The chain is UPF0354 protein Lm4b_01619 from Listeria monocytogenes serotype 4b (strain CLIP80459).